Consider the following 333-residue polypeptide: Isoaspartyl peptidase/L-asparaginase (333 aa).

Threonine 191 functions as the Nucleophile in the catalytic mechanism. Substrate is bound by residues arginine 219 to aspartate 222 and threonine 242 to glycine 245.

The protein belongs to the Ntn-hydrolase family. As to quaternary structure, heterodimer of an alpha and beta chain produced by autocleavage. This heterodimer may then dimerize in turn, giving rise to a heterotetramer. In terms of processing, cleaved into an alpha and beta chain by autocatalysis; this activates the enzyme. The N-terminal residue of the beta subunit is responsible for the nucleophile hydrolase activity. As to expression, present in testis, brain, liver, kidney, heart and skeletal muscle. In brain, specifically present in the astrocytic lineage. Present in sperm (at protein level).

Its subcellular location is the cytoplasm. It carries out the reaction L-asparagine + H2O = L-aspartate + NH4(+). It catalyses the reaction Cleavage of a beta-linked Asp residue from the N-terminus of a polypeptide.. In terms of biological role, has both L-asparaginase and beta-aspartyl peptidase activity. Is highly active with L-Asp beta-methyl ester. Besides, has catalytic activity toward beta-aspartyl dipeptides and their methyl esters, including beta-L-Asp-L-Phe, beta-L-Asp-L-Phe methyl ester (aspartame), beta-L-Asp-L-Ala, beta-L-Asp-L-Leu and beta-L-Asp-L-Lys. Does not have aspartylglucosaminidase activity and is inactive toward GlcNAc-L-Asn. Likewise, has no activity toward glutamine. May be involved in the production of L-aspartate, which can act as an excitatory neurotransmitter in some brain regions. The chain is Isoaspartyl peptidase/L-asparaginase (Asrgl1) from Rattus norvegicus (Rat).